A 248-amino-acid polypeptide reads, in one-letter code: MAGHSKWANIKHKKAKEDAKRGKIFTKLIREITVAARLGGGDKDANPRLRAAIATALANNMSKDTIERAVVKGAGGDESANVEEVRYEGYGPGGVAIIVDCMTDNRNRTVGEVRHAFTKSGGNLGTDGSVAYMFTKRGIISFAPGVDEDALMEVALEAGAEDIITHEDGSIDVYTDPYDFSDIQEVLIEKGFNSENAEVTFDAETKAELDAETAEKVMALIDKLEDLDDVQSVYSNANFTQELIEQIG.

The protein belongs to the TACO1 family.

It localises to the cytoplasm. The polypeptide is Probable transcriptional regulatory protein FTN_1028 (Francisella tularensis subsp. novicida (strain U112)).